A 185-amino-acid chain; its full sequence is Hypoxanthine/guanine phosphoribosyltransferase (185 aa).

It belongs to the purine/pyrimidine phosphoribosyltransferase family. Archaeal HPRT subfamily. As to quaternary structure, homodimer.

The protein localises to the cytoplasm. It carries out the reaction IMP + diphosphate = hypoxanthine + 5-phospho-alpha-D-ribose 1-diphosphate. It catalyses the reaction GMP + diphosphate = guanine + 5-phospho-alpha-D-ribose 1-diphosphate. It participates in purine metabolism; IMP biosynthesis via salvage pathway; IMP from hypoxanthine: step 1/1. Its function is as follows. Catalyzes a salvage reaction resulting in the formation of IMP that is energically less costly than de novo synthesis. This chain is Hypoxanthine/guanine phosphoribosyltransferase, found in Methanococcus maripaludis (strain C7 / ATCC BAA-1331).